A 482-amino-acid chain; its full sequence is tRNA sulfurtransferase (482 aa).

In terms of domain architecture, THUMP spans 61-165 (DVTLSVLTQT…NDKLNLIIAR (105 aa)). ATP contacts are provided by residues 183–184 (LI), K265, G287, and Q296. A disulfide bridge connects residues C344 and C456. One can recognise a Rhodanese domain in the interval 404–482 (LGSDVVVLDI…GYKNVKVYRP (79 aa)). Residue C456 is the Cysteine persulfide intermediate of the active site.

Belongs to the ThiI family.

It is found in the cytoplasm. It carries out the reaction [ThiI sulfur-carrier protein]-S-sulfanyl-L-cysteine + a uridine in tRNA + 2 reduced [2Fe-2S]-[ferredoxin] + ATP + H(+) = [ThiI sulfur-carrier protein]-L-cysteine + a 4-thiouridine in tRNA + 2 oxidized [2Fe-2S]-[ferredoxin] + AMP + diphosphate. It catalyses the reaction [ThiS sulfur-carrier protein]-C-terminal Gly-Gly-AMP + S-sulfanyl-L-cysteinyl-[cysteine desulfurase] + AH2 = [ThiS sulfur-carrier protein]-C-terminal-Gly-aminoethanethioate + L-cysteinyl-[cysteine desulfurase] + A + AMP + 2 H(+). It functions in the pathway cofactor biosynthesis; thiamine diphosphate biosynthesis. Its function is as follows. Catalyzes the ATP-dependent transfer of a sulfur to tRNA to produce 4-thiouridine in position 8 of tRNAs, which functions as a near-UV photosensor. Also catalyzes the transfer of sulfur to the sulfur carrier protein ThiS, forming ThiS-thiocarboxylate. This is a step in the synthesis of thiazole, in the thiamine biosynthesis pathway. The sulfur is donated as persulfide by IscS. This is tRNA sulfurtransferase from Aliivibrio fischeri (strain MJ11) (Vibrio fischeri).